The primary structure comprises 147 residues: MAVHKEVSFVAYLLIVLGMFLYVDALGCTKECGNLGFGICPRSEGSPTNPICINCCSGYKGCNYYSAFGDLICQGESDPKNPKACPLNCDTNIAYSRCPRSEGKSLIYPTGCTTCCTGYKGCYYFGTNGKFVCEGESDEPKPYMSTA.

The first 25 residues, 1–25, serve as a signal peptide directing secretion; that stretch reads MAVHKEVSFVAYLLIVLGMFLYVDA. 2 consecutive repeat copies span residues 25-82 and 83-142. Intrachain disulfides connect Cys28/Cys116, Cys32/Cys112, Cys40/Cys122, Cys52/Cys89, Cys55/Cys73, Cys56/Cys85, Cys62/Cys98, and Cys115/Cys133.

It belongs to the protease inhibitor I20 (potato type II proteinase inhibitor) family.

Its function is as follows. Inhibitor of trypsin and chymotrypsin. In Solanum tuberosum (Potato), this protein is Proteinase inhibitor type-2 T (PIN2T).